The following is a 72-amino-acid chain: Mitotic-spindle organizing protein 1 (72 aa).

This sequence belongs to the MOZART1 family. As to quaternary structure, part of the gamma-tubulin complex.

Its subcellular location is the cytoplasm. It localises to the cytoskeleton. The protein localises to the microtubule organizing center. The protein resides in the centrosome. It is found in the spindle. Its function is as follows. Required for gamma-tubulin complex recruitment to the centrosome. The sequence is that of Mitotic-spindle organizing protein 1 (mzt1) from Xenopus laevis (African clawed frog).